Reading from the N-terminus, the 157-residue chain is Class-10 pathogenesis-related protein 1 (157 aa).

Belongs to the BetVI family. As to expression, high levels in roots and not detectable in hypocotyls, cotyledons, stems, leaves and flower buds of untreated plants. After induction, high levels are present in the vascular bundles of leaves.

It localises to the cytoplasm. This is Class-10 pathogenesis-related protein 1 (MSPR10-1) from Medicago sativa (Alfalfa).